The chain runs to 572 residues: Dihydroxy-acid dehydratase (572 aa).

Cysteine 57 is a binding site for [2Fe-2S] cluster. Position 89 (aspartate 89) interacts with Mg(2+). A [2Fe-2S] cluster-binding site is contributed by cysteine 130. Positions 131 and 132 each coordinate Mg(2+). Lysine 132 carries the post-translational modification N6-carboxylysine. Cysteine 202 is a binding site for [2Fe-2S] cluster. Position 453 (glutamate 453) interacts with Mg(2+). Serine 479 (proton acceptor) is an active-site residue.

This sequence belongs to the IlvD/Edd family. As to quaternary structure, homodimer. Requires [2Fe-2S] cluster as cofactor. Mg(2+) serves as cofactor.

It catalyses the reaction (2R)-2,3-dihydroxy-3-methylbutanoate = 3-methyl-2-oxobutanoate + H2O. The enzyme catalyses (2R,3R)-2,3-dihydroxy-3-methylpentanoate = (S)-3-methyl-2-oxopentanoate + H2O. It participates in amino-acid biosynthesis; L-isoleucine biosynthesis; L-isoleucine from 2-oxobutanoate: step 3/4. The protein operates within amino-acid biosynthesis; L-valine biosynthesis; L-valine from pyruvate: step 3/4. In terms of biological role, functions in the biosynthesis of branched-chain amino acids. Catalyzes the dehydration of (2R,3R)-2,3-dihydroxy-3-methylpentanoate (2,3-dihydroxy-3-methylvalerate) into 2-oxo-3-methylpentanoate (2-oxo-3-methylvalerate) and of (2R)-2,3-dihydroxy-3-methylbutanoate (2,3-dihydroxyisovalerate) into 2-oxo-3-methylbutanoate (2-oxoisovalerate), the penultimate precursor to L-isoleucine and L-valine, respectively. The polypeptide is Dihydroxy-acid dehydratase (Streptococcus thermophilus (strain CNRZ 1066)).